The sequence spans 301 residues: Hydroxymethylglutaryl-CoA lyase (301 aa).

Residues 4 to 271 (VKVFEVGPRD…STGVDLEAVA (268 aa)) form the Pyruvate carboxyltransferase domain. Residue Arg-12 coordinates substrate. A divalent metal cation-binding residues include Asp-13, His-204, and His-206. Cys-237 is an active-site residue. Position 246 (Asn-246) interacts with a divalent metal cation.

The protein belongs to the HMG-CoA lyase family.

The catalysed reaction is (3S)-3-hydroxy-3-methylglutaryl-CoA = acetoacetate + acetyl-CoA. Its pathway is metabolic intermediate metabolism; (S)-3-hydroxy-3-methylglutaryl-CoA degradation; acetoacetate from (S)-3-hydroxy-3-methylglutaryl-CoA: step 1/1. In terms of biological role, involved in the catabolism of branched amino acids such as leucine. This Pseudomonas mevalonii protein is Hydroxymethylglutaryl-CoA lyase (mvaB).